Consider the following 444-residue polypeptide: MAAAPSAGGVGEGSSSSAAAAAAAAAATIGPHVVDEEAMWQMNLGEAMEAGPYPERIGEPDCSYYMRTGLCRFGMTCKFNHPADRKMAVAAARMKGEYPQRIGQPECQYYLKTGTCKFGATCKFHHPREKAAIATRVQLNALGYPLRPNEKECAYYLRTGQCKFGSTCKFHHPQPSNTMVAVRGSVYSPGQSVTSPSQHTYPGAVTNWPLSRSASFIASPRWPGHSSYAQVIVPPGLVQVPGWNPYAAQIGSSSSDDQQRTAGGAQYYTGSRHSETPNMGDQGMFSSYQAGSVPLGLYTVQRESIFPERPDQPECQFYMKTGDCKFGAVCKFHHPKERIIPTPNCALSSLGLPLRPGEPICTFYSRYGICKFGPNCKFDHPMGTVMYGLATSPTGDVSARRMLAPVPAHSEVSPDNVSGRSRRITHSDSQQIPSGERGTEREAS.

3 C3H1-type zinc fingers span residues 56–84, 101–129, and 147–175; these read RIGE…HPAD, RIGQ…HPRE, and RPNE…HPQP. The disordered stretch occupies residues 251–276; the sequence is GSSSSDDQQRTAGGAQYYTGSRHSET. 2 consecutive C3H1-type zinc fingers follow at residues 309 to 337 and 355 to 383; these read RPDQ…HPKE and RPGE…HPMG. The segment at 405-444 is disordered; sequence PVPAHSEVSPDNVSGRSRRITHSDSQQIPSGERGTEREAS.

The chain is Zinc finger CCCH domain-containing protein 63 from Oryza sativa subsp. japonica (Rice).